We begin with the raw amino-acid sequence, 1939 residues long: Myosin-4 (1939 aa).

Residues 33–82 (DAKTSVFVVDPKESYVKAIVQSREGGKVTAKTEAGATVTVKEDQVFSMNP) form the Myosin N-terminal SH3-like domain. Residues Thr-64 and Thr-69 each carry the phosphothreonine modification. The residue at position 79 (Ser-79) is a Phosphoserine. The 697-residue stretch at 86 to 782 (DKIEDMAMMT…LLGTLEEMRD (697 aa)) folds into the Myosin motor domain. Lys-130 is subject to N6,N6,N6-trimethyllysine. 179–186 (GESGAGKT) is a binding site for ATP. Residue Tyr-389 is modified to Phosphotyrosine. The residue at position 391 (Thr-391) is a Phosphothreonine. Phosphoserine is present on Ser-392. A Phosphothreonine modification is found at Thr-419. Position 424 is a phosphotyrosine (Tyr-424). Phosphoserine is present on Ser-625. Residues 659 to 681 (LNKLMTNLRSTHPHFVRCIIPNE) are actin-binding. A Pros-methylhistidine modification is found at His-757. The segment at 761–775 (KFGHTKVFFKAGLLG) is actin-binding. Thr-776 carries the post-translational modification Phosphothreonine. The IQ domain occupies 785–814 (LAQLITRTQAICRGFLMRVEFRKMMERRES). Residues 843–1939 (LLKSAETEKE…EVHTKVISEE (1097 aa)) adopt a coiled-coil conformation. Phosphoserine is present on residues Ser-1092, Ser-1162, and Ser-1237. At Thr-1241 the chain carries Phosphothreonine. Ser-1243 is subject to Phosphoserine. Thr-1255 is subject to Phosphothreonine. Position 1261 is a phosphoserine (Ser-1261). The residue at position 1265 (Thr-1265) is a Phosphothreonine. The residue at position 1278 (Ser-1278) is a Phosphoserine. Residue Thr-1286 is modified to Phosphothreonine. Residues Ser-1288, Ser-1292, Ser-1303, Ser-1306, and Ser-1413 each carry the phosphoserine modification. Phosphotyrosine is present on Tyr-1464. Thr-1467 carries the phosphothreonine modification. Position 1474 is a phosphoserine (Ser-1474). Tyr-1492 carries the phosphotyrosine modification. At Ser-1495 the chain carries Phosphoserine. The residue at position 1501 (Thr-1501) is a Phosphothreonine. A Phosphoserine modification is found at Ser-1514. Residue Thr-1517 is modified to Phosphothreonine. 8 positions are modified to phosphoserine: Ser-1542, Ser-1547, Ser-1554, Ser-1574, Ser-1600, Ser-1603, Ser-1714, and Ser-1726. Phosphothreonine is present on residues Thr-1730 and Thr-1736. At Ser-1739 the chain carries Phosphoserine.

The protein belongs to the TRAFAC class myosin-kinesin ATPase superfamily. Myosin family. Muscle myosin is a hexameric protein that consists of 2 heavy chain subunits (MHC), 2 alkali light chain subunits (MLC) and 2 regulatory light chain subunits (MLC-2).

The protein resides in the cytoplasm. It is found in the myofibril. Functionally, muscle contraction. In Homo sapiens (Human), this protein is Myosin-4 (MYH4).